The primary structure comprises 346 residues: Glycerol-3-phosphate dehydrogenase [NAD(P)+] (346 aa).

Residues Ser11, Trp12, His32, Arg33, and Lys106 each coordinate NADPH. Sn-glycerol 3-phosphate is bound by residues Lys106, Gly137, and Ser139. Ala141 is an NADPH binding site. The sn-glycerol 3-phosphate site is built by Lys193, Asp246, Ser256, Arg257, and Asn258. The active-site Proton acceptor is the Lys193. Residue Arg257 coordinates NADPH. NADPH is bound by residues Val281 and Glu283.

The protein belongs to the NAD-dependent glycerol-3-phosphate dehydrogenase family.

It localises to the cytoplasm. The catalysed reaction is sn-glycerol 3-phosphate + NAD(+) = dihydroxyacetone phosphate + NADH + H(+). It carries out the reaction sn-glycerol 3-phosphate + NADP(+) = dihydroxyacetone phosphate + NADPH + H(+). It functions in the pathway membrane lipid metabolism; glycerophospholipid metabolism. Functionally, catalyzes the reduction of the glycolytic intermediate dihydroxyacetone phosphate (DHAP) to sn-glycerol 3-phosphate (G3P), the key precursor for phospholipid synthesis. The protein is Glycerol-3-phosphate dehydrogenase [NAD(P)+] of Bacillus licheniformis (strain ATCC 14580 / DSM 13 / JCM 2505 / CCUG 7422 / NBRC 12200 / NCIMB 9375 / NCTC 10341 / NRRL NRS-1264 / Gibson 46).